The primary structure comprises 510 residues: MTEPNTPAAPTGQAQDDNQIMAERREKLAALRQQGVAYPNDFCPTHHAADLHTRYSETDQPALEAANVEVALAGRMMLKRVMGKASFATVQDGSGQIQFYITRDRVGEDVYAAFKHWDLGDIVAARGVLFRTNKGELSVQVQELRLLSKSLRPLPDKFHGLADQEMKYRQRYVDLIVSPETRNTFRARTKAIASLRHHMSDAGFMEVETPMLHPIPGGAAAKPFITHHNALDMQMFLRIAPELYLKRLIVGGFERVYEINRNFRNEGVSPRHNPEFTMMEFYAAYTDYRWLMDYTENLIRQAAIDATGSAALNYQGRELDLSKPFHRLTICQAIQKYAPQYTDAQLADANFLRAELKKFKIDTNAPQFLNAGVGTLQLVLFEETAESQLWEPTFIVDYPVEVSPLARGSDTLPGITERFELFITGREIANGFSELNDPEDQAERFRKQVEQKDAGDEEAMFYDADYIRALEYGMPPTGGCGIGIDRLVMLLTDSPNIRDVILFPHLRRED.

2 residues coordinate Mg(2+): glutamate 420 and glutamate 427.

This sequence belongs to the class-II aminoacyl-tRNA synthetase family. Homodimer. The cofactor is Mg(2+).

The protein localises to the cytoplasm. The catalysed reaction is tRNA(Lys) + L-lysine + ATP = L-lysyl-tRNA(Lys) + AMP + diphosphate. The protein is Lysine--tRNA ligase of Ralstonia nicotianae (strain ATCC BAA-1114 / GMI1000) (Ralstonia solanacearum).